We begin with the raw amino-acid sequence, 191 residues long: Recombination protein RecR (191 aa).

The segment at 51–66 (CQTCFHLSADPECEIC) adopts a C4-type zinc-finger fold. A Toprim domain is found at 74 to 168 (GVICVVADSR…SVSRIAYGLP (95 aa)).

It belongs to the RecR family.

In terms of biological role, may play a role in DNA repair. It seems to be involved in an RecBC-independent recombinational process of DNA repair. It may act with RecF and RecO. This is Recombination protein RecR from Synechococcus sp. (strain CC9605).